Consider the following 581-residue polypeptide: Bestrophin-1 (581 aa).

The Cytoplasmic portion of the chain corresponds to 1 to 31 (MTVTYSSQVANARLGSFSRLLLCWRGSIYKL). Residue Ala-10 coordinates Ca(2+). The helical transmembrane segment at 32 to 51 (LYGEFLIFLLCYYIIRFIYR) threads the bilayer. Residues 52-60 (MALTDEQQV) lie on the Extracellular side of the membrane. The helical transmembrane segment at 61–82 (IFEKLTLYCDSYIQLIPISFVL) threads the bilayer. Over 83-237 (GFYVTLVVTR…DWISVPLVYT (155 aa)) the chain is Cytoplasmic. Residues 238–255 (QVVTVAVYSFFLACLVGR) traverse the membrane as a helical segment. Over 256–274 (QFLNPAKAYPGHEMDLVVP) the chain is Extracellular. The chain crosses the membrane as a helical span at residues 275 to 288 (LFTFLQFFFYAGWL). At 289–581 (KVAEQLINPF…ALENRDEAHS (293 aa)) the chain is on the cytoplasmic side. Gln-293, Asn-296, Asp-301, and Asp-304 together coordinate Ca(2+). The disordered stretch occupies residues 416 to 440 (EGHFHEGHPKNLRGARLDSSDQEDS).

This sequence belongs to the anion channel-forming bestrophin (TC 1.A.46) family. Calcium-sensitive chloride channel subfamily. Interacts with YWHAG; this interaction promotes the ligand-gated L-glutamate channel activity leading to the positive regulation of NMDA glutamate receptor activity through the L-glutamate secretion. Phosphorylated (in vitro). In terms of processing, dephosphorylated (in vitro) by PP2A.

The protein localises to the cell membrane. It is found in the basolateral cell membrane. It catalyses the reaction chloride(in) = chloride(out). It carries out the reaction hydrogencarbonate(in) = hydrogencarbonate(out). The catalysed reaction is 4-aminobutanoate(in) = 4-aminobutanoate(out). The enzyme catalyses L-glutamate(out) = L-glutamate(in). Its function is as follows. Ligand-gated anion channel that allows the movement of anions across cell membranes when activated by calcium (Ca2+). Allows the movement of chloride and hydrogencarbonate. Found in a partially open conformation leading to significantly smaller chloride movement. Upon F2R/PAR-1 activation, the sequestered calcium is released into the cytosol of astrocytes, leading to the (Ca2+)-dependent release of L-glutamate into the synaptic cleft that targets the neuronal postsynaptic GRIN2A/NMDAR receptor resulting in the synaptic plasticity regulation. Upon activation of the norepinephrine-alpha-1 adrenergic receptor signaling pathway, transports as well D-serine than L-glutamate in a (Ca2+)-dependent manner, leading to activation of adjacent NMDAR receptors and therefore regulates the heterosynaptic long-term depression and metaplasticity during initial memory acquisition. Releases the 4-aminobutanoate neurotransmitter in a (Ca2+)-dependent manner, and participates in its tonic release from cerebellar glial cells. The sequence is that of Bestrophin-1 from Sus scrofa (Pig).